Reading from the N-terminus, the 49-residue chain is Osteocalcin (49 aa).

Residues 1–47 enclose the Gla domain; the sequence is YLYQWLGAPAPYPDPLEPKREVCELNPDCDELADHIGFQEAYRRFYG. Pro-9 is subject to 4-hydroxyproline. Residues Glu-17, Glu-21, Glu-24, and Asp-30 each contribute to the Ca(2+) site. Glu-17, Glu-21, and Glu-24 each carry 4-carboxyglutamate. A disulfide bridge links Cys-23 with Cys-29.

Belongs to the osteocalcin/matrix Gla protein family. Gamma-carboxyglutamate residues are formed by vitamin K dependent carboxylation by GGCX. These residues are essential for the binding of calcium. Decarboxylation promotes the hormone activity.

It localises to the secreted. Functionally, the carboxylated form is one of the main organic components of the bone matrix, which constitutes 1-2% of the total bone protein: it acts as a negative regulator of bone formation and is required to limit bone formation without impairing bone resorption or mineralization. The carboxylated form binds strongly to apatite and calcium. In terms of biological role, the uncarboxylated form acts as a hormone secreted by osteoblasts, which regulates different cellular processes, such as energy metabolism, male fertility and brain development. Regulates of energy metabolism by acting as a hormone favoring pancreatic beta-cell proliferation, insulin secretion and sensitivity and energy expenditure. Uncarboxylated osteocalcin hormone also promotes testosterone production in the testes: acts as a ligand for G protein-coupled receptor GPRC6A at the surface of Leydig cells, initiating a signaling response that promotes the expression of enzymes required for testosterone synthesis in a CREB-dependent manner. Also acts as a regulator of brain development: osteocalcin hormone crosses the blood-brain barrier and acts as a ligand for GPR158 on neurons, initiating a signaling response that prevents neuronal apoptosis in the hippocampus, favors the synthesis of all monoamine neurotransmitters and inhibits that of gamma-aminobutyric acid (GABA). Osteocalcin also crosses the placenta during pregnancy and maternal osteocalcin is required for fetal brain development. In Macaca fascicularis (Crab-eating macaque), this protein is Osteocalcin (BGLAP).